The following is a 402-amino-acid chain: Calcium-responsive transactivator (402 aa).

The N-terminal auto-inhibitory domain; necessary for interaction with SMARCA4/BRG1 stretch occupies residues 1 to 148 (MSVAFASARP…TLPTTSMSMS (148 aa)). The SH2-binding signature appears at 50–53 (YQQI). Disordered stretches follow at residues 72–129 (QSLL…GPNH), 141–170 (PTTS…SVPL), 195–250 (MHQQ…SSQQ), 262–290 (QYGH…YQPA), and 305–402 (TQHY…NYQQ). Residues 92 to 106 (QSGSAQGLHSQGSLS) show a composition bias toward low complexity. The span at 117–129 (SLMQAQIGNGPNH) shows a compositional bias: polar residues. The methionine-rich intra-molecular domain stretch occupies residues 149–237 (GSGHGSGPGY…GGGVMGQRPM (89 aa)). Residues 196-224 (HQQAASSHYSAAQGGSQHYQGQSMAMMGQ) show a composition bias toward low complexity. The MFD domain stretch occupies residues 251 to 323 (YLGQEEYYGG…SQYSQQQTGY (73 aa)). 2 stretches are compositionally biased toward low complexity: residues 311 to 379 (GGNS…RASQ) and 390 to 402 (YGYE…NYQQ). The segment at 340 to 402 (NQQSYPGQQQ…EQGQYGNYQQ (63 aa)) is necessary for nuclear localization. The SH2-binding signature appears at 359 to 362 (SQYS). The SH3-binding signature appears at 377–385 (ASQTGPSTQ). Positions 393 to 402 (EQGQYGNYQQ) are necessary for interaction with CREBBP and for the recruitment of CREBBP to the nuclear bodies. Residues 397–400 (YGNY) carry the SH2-binding motif.

This sequence belongs to the SS18 family. Homodimer. Dimerization may be necessary for its function in neuronal dendritic development. Interacts (via C-terminus) with CREBBP (via N-terminus), EP300 and SMARCA4/BRG1. Interacts with the nBAF complex. Association with CREBBP facilitates transcription while the association with SMARCA4/BRG1 suppresses CREST-mediated transcription in resting neurons.

The protein resides in the nucleus. It localises to the chromosome. Its subcellular location is the centromere. It is found in the kinetochore. Its function is as follows. Transcriptional activator which is required for calcium-dependent dendritic growth and branching in cortical neurons. Recruits CREB-binding protein (CREBBP) to nuclear bodies. Component of the CREST-BRG1 complex, a multiprotein complex that regulates promoter activation by orchestrating a calcium-dependent release of a repressor complex and a recruitment of an activator complex. In resting neurons, transcription of the c-FOS promoter is inhibited by BRG1-dependent recruitment of a phospho-RB1-HDAC1 repressor complex. Upon calcium influx, RB1 is dephosphorylated by calcineurin, which leads to release of the repressor complex. At the same time, there is increased recruitment of CREBBP to the promoter by a CREST-dependent mechanism, which leads to transcriptional activation. The CREST-BRG1 complex also binds to the NR2B promoter, and activity-dependent induction of NR2B expression involves a release of HDAC1 and recruitment of CREBBP. This Bos taurus (Bovine) protein is Calcium-responsive transactivator (SS18L1).